Consider the following 305-residue polypeptide: MFDLDEWIATVRKCKYLPEHQLKRLCEMVKVILMEESNIQPVRTPVTVCGDIHGQFYDLLELFRVGGELPSTNYIFMGDFVDRGYFSLETFTLFMLLKARYPDKITLLRGNHESRQITQVYGFYDECQTKYGNANVWKYCCQVFDFLTLAAVIDNKILCVHGGLSPEVRTLDQIRILARAQEIPHEGSFCDLMWSDPEDIESWTVSPRGAGWLFGSKVTTEFSQINDLTLIARAHQLVQEGYKYHFADKNLVTVWSAPNYCYRCGNVASVMKVDESLEPEFRIFSAVADEDRTVPPSRKRSEYFI.

Asp51, His53, Asp79, and Asn111 together coordinate Mn(2+). The active-site Proton donor is the His112. His161 and His235 together coordinate Mn(2+).

Belongs to the PPP phosphatase family. PP-6 (PP-V) subfamily. As to quaternary structure, interacts with sts5, ekc1 and mis12. The cofactor is Mn(2+).

The protein resides in the nucleus. The enzyme catalyses O-phospho-L-seryl-[protein] + H2O = L-seryl-[protein] + phosphate. It catalyses the reaction O-phospho-L-threonyl-[protein] + H2O = L-threonyl-[protein] + phosphate. In terms of biological role, has a role in chromosome segregation. May provide a dynamic connection between kinetochore microtubules and kinetochore chromatin. Negatively regulates mis12. The sequence is that of Serine/threonine-protein phosphatase ppe1 (ppe1) from Schizosaccharomyces pombe (strain 972 / ATCC 24843) (Fission yeast).